Consider the following 475-residue polypeptide: Protein nucleotidyltransferase YdiU (475 aa).

Gly82, Gly84, Arg85, Lys105, Asp117, Gly118, Arg168, and Arg175 together coordinate ATP. The active-site Proton acceptor is Asp240. Residues Asn241 and Asp250 each contribute to the Mg(2+) site. Residue Asp250 participates in ATP binding.

Belongs to the SELO family. The cofactor is Mg(2+). Mn(2+) is required as a cofactor.

The enzyme catalyses L-seryl-[protein] + ATP = 3-O-(5'-adenylyl)-L-seryl-[protein] + diphosphate. It carries out the reaction L-threonyl-[protein] + ATP = 3-O-(5'-adenylyl)-L-threonyl-[protein] + diphosphate. The catalysed reaction is L-tyrosyl-[protein] + ATP = O-(5'-adenylyl)-L-tyrosyl-[protein] + diphosphate. It catalyses the reaction L-histidyl-[protein] + UTP = N(tele)-(5'-uridylyl)-L-histidyl-[protein] + diphosphate. The enzyme catalyses L-seryl-[protein] + UTP = O-(5'-uridylyl)-L-seryl-[protein] + diphosphate. It carries out the reaction L-tyrosyl-[protein] + UTP = O-(5'-uridylyl)-L-tyrosyl-[protein] + diphosphate. Functionally, nucleotidyltransferase involved in the post-translational modification of proteins. It can catalyze the addition of adenosine monophosphate (AMP) or uridine monophosphate (UMP) to a protein, resulting in modifications known as AMPylation and UMPylation. This chain is Protein nucleotidyltransferase YdiU, found in Aeromonas salmonicida (strain A449).